Consider the following 133-residue polypeptide: Antifungal protein ginkbilobin-like protein 1 (133 aa).

Positions 1–24 (MSMGSFGFALAVMVLAVLVASAAG) are cleaved as a signal peptide. One can recognise a Gnk2-homologous domain in the interval 28–133 (TNFVSSACNT…CFIRYEQYSI (106 aa)). Disulfide bonds link Cys-35-Cys-111, Cys-87-Cys-96, and Cys-99-Cys-124. Residue Asn-36 coordinates alpha-D-mannopyranose. Positions 118 and 129 each coordinate alpha-D-mannopyranose.

Functionally, exerts antifungal activity through its carbohydrate-binding specificity. This is Antifungal protein ginkbilobin-like protein 1 from Picea sitchensis (Sitka spruce).